We begin with the raw amino-acid sequence, 238 residues long: Orotidine 5'-phosphate decarboxylase (238 aa).

Substrate contacts are provided by residues Asp10, Lys32, 59 to 68 (DLKLHDIPNT), Thr122, Arg184, Gln193, Gly213, and Arg214. Lys61 (proton donor) is an active-site residue.

It belongs to the OMP decarboxylase family. Type 1 subfamily. Homodimer.

It carries out the reaction orotidine 5'-phosphate + H(+) = UMP + CO2. Its pathway is pyrimidine metabolism; UMP biosynthesis via de novo pathway; UMP from orotate: step 2/2. In terms of biological role, catalyzes the decarboxylation of orotidine 5'-monophosphate (OMP) to uridine 5'-monophosphate (UMP). The protein is Orotidine 5'-phosphate decarboxylase of Bacillus cereus (strain B4264).